The chain runs to 447 residues: Tubulin beta-2 chain (447 aa).

Positions 11, 69, 138, 142, 143, 144, 204, and 226 each coordinate GTP. Glu-69 lines the Mg(2+) pocket. Residues 426-447 (QDAGVDEEEEEYEDDAPLEEEV) are disordered. Positions 429–447 (GVDEEEEEYEDDAPLEEEV) are enriched in acidic residues.

It belongs to the tubulin family. Dimer of alpha and beta chains. A typical microtubule is a hollow water-filled tube with an outer diameter of 25 nm and an inner diameter of 15 nM. Alpha-beta heterodimers associate head-to-tail to form protofilaments running lengthwise along the microtubule wall with the beta-tubulin subunit facing the microtubule plus end conferring a structural polarity. Microtubules usually have 13 protofilaments but different protofilament numbers can be found in some organisms and specialized cells. The cofactor is Mg(2+).

Its subcellular location is the cytoplasm. It localises to the cytoskeleton. Its function is as follows. Tubulin is the major constituent of microtubules, a cylinder consisting of laterally associated linear protofilaments composed of alpha- and beta-tubulin heterodimers. Microtubules grow by the addition of GTP-tubulin dimers to the microtubule end, where a stabilizing cap forms. Below the cap, tubulin dimers are in GDP-bound state, owing to GTPase activity of alpha-tubulin. This Colletotrichum graminicola (Maize anthracnose fungus) protein is Tubulin beta-2 chain (TUB2).